The following is a 160-amino-acid chain: Transcription elongation factor GreA (160 aa).

Residues 1 to 72 (MAEKTYPMTL…QISSLETKIR (72 aa)) are a coiled coil.

Belongs to the GreA/GreB family.

Necessary for efficient RNA polymerase transcription elongation past template-encoded arresting sites. The arresting sites in DNA have the property of trapping a certain fraction of elongating RNA polymerases that pass through, resulting in locked ternary complexes. Cleavage of the nascent transcript by cleavage factors such as GreA or GreB allows the resumption of elongation from the new 3'terminus. GreA releases sequences of 2 to 3 nucleotides. In Streptococcus pneumoniae (strain Hungary19A-6), this protein is Transcription elongation factor GreA.